The primary structure comprises 240 residues: ANSVCFTFTDFESGQQDLIFQGDASVGSNKALQLTKVDSKGNPQGGSVGRALYTAPIRLWQSSSLVASFETTFTFSISQGSSTPAAALTFFIASPDTKIPSGSGGRLLGLFGSSNNAGSDNGVVAVEFDTYPNTDIGDPNYRHIGIDVNSIRSKAASKWDWQNGKTATAHISYNSASKRLSVVSSYPNSSPVVVSFDVELNNVGPPDVRVGFSATTGQYTQTNNILAWSFRSSLMGYQAN.

Residues glutamate 127 and aspartate 129 each contribute to the Mn(2+) site. Residues aspartate 129, tyrosine 131, asparagine 133, and aspartate 138 each contribute to the Ca(2+) site. Positions 138 and 143 each coordinate Mn(2+).

It belongs to the leguminous lectin family. As to quaternary structure, heterotetramer of two alpha and two beta chains; disulfide bond linked.

Its function is as follows. Binds preferentially to oligosaccharides bearing the sequence Man-alpha-1-&gt;2 Man-alpha-1-&gt;6 Man-alpha-1-&gt;6Man found in early steps of glycoprotein processing in the endoplasmic reticulum. It binds weakly to highly processed oligosaccharide structures. The sequence is that of Lectin from Leucomphalos mildbraedii (Bowringia mildbraedii).